The chain runs to 407 residues: SERPINE1 mRNA-binding protein 1 (407 aa).

The residue at position 25 (serine 25) is a Phosphoserine. The interval 33-227 (AAENKKKEAG…GSGSHNWGTV (195 aa)) is disordered. Residues 51-68 (AKSAAQAAAQTNSNAAGK) show a composition bias toward low complexity. Lysine 52 carries the post-translational modification N6-acetyllysine; alternate. Lysine 52 participates in a covalent cross-link: Glycyl lysine isopeptide (Lys-Gly) (interchain with G-Cter in SUMO1); alternate. The residue at position 68 (lysine 68) is an N6-acetyllysine. Basic and acidic residues-rich tracts occupy residues 70–80 (LRKESQKDRKN), 89–114 (VDKK…RRPD), and 122–162 (KIID…DRPI). Residue lysine 102 forms a Glycyl lysine isopeptide (Lys-Gly) (interchain with G-Cter in SUMO1); alternate linkage. Residue lysine 102 forms a Glycyl lysine isopeptide (Lys-Gly) (interchain with G-Cter in SUMO2) linkage. Lysine 102 is covalently cross-linked (Glycyl lysine isopeptide (Lys-Gly) (interchain with G-Cter in SUMO2); alternate). N6-acetyllysine occurs at positions 122 and 140. The segment covering 164 to 182 (GRGGLGRGRGGRGRGMGRG) has biased composition (gly residues). Omega-N-methylarginine occurs at positions 165 and 188. The segment covering 183-199 (DGFDSRGKREFDRHSGS) has biased composition (basic and acidic residues). Phosphoserine is present on residues serine 197, serine 199, serine 203, serine 205, and serine 208. Lysine 211 carries the N6-acetyllysine; alternate modification. Residue lysine 211 forms a Glycyl lysine isopeptide (Lys-Gly) (interchain with G-Cter in SUMO2); alternate linkage. Arginine 216 carries the post-translational modification Omega-N-methylarginine. Serine 221 carries the phosphoserine modification. Phosphothreonine is present on threonine 226. Lysine 228 participates in a covalent cross-link: Glycyl lysine isopeptide (Lys-Gly) (interchain with G-Cter in SUMO1); alternate. Lysine 228 is covalently cross-linked (Glycyl lysine isopeptide (Lys-Gly) (interchain with G-Cter in SUMO2); alternate). Serine 234 is modified (phosphoserine). Residues 242–256 (ISYNCSDLDQSNVTE) are compositionally biased toward polar residues. 2 disordered regions span residues 242 to 291 (ISYN…TLDE) and 327 to 407 (SKSE…PALA). Positions 261–274 (GEEHPVADTENKEN) are enriched in basic and acidic residues. A Glycyl lysine isopeptide (Lys-Gly) (interchain with G-Cter in SUMO1); alternate cross-link involves residue lysine 280. Lysine 280 is covalently cross-linked (Glycyl lysine isopeptide (Lys-Gly) (interchain with G-Cter in SUMO2)). A Glycyl lysine isopeptide (Lys-Gly) (interchain with G-Cter in SUMO2); alternate cross-link involves residue lysine 280. 2 stretches are compositionally biased toward basic and acidic residues: residues 281 to 291 (EEGPKEMTLDE) and 327 to 341 (SKSE…VMDH). Lysine 328 bears the N6-acetyllysine mark. Serine 329 carries the phosphoserine modification. A compositionally biased stretch (gly residues) spans 362–371 (GRPGRGGRGG). An omega-N-methylarginine mark is found at arginine 363, arginine 366, and arginine 369. Serine 391 and serine 393 each carry phosphoserine.

Belongs to the SERBP1-HABP4 family. Associates with mature 80S ribosomes. Interacts with EEF2/eEF2; interaction sequesters EEF2/eEF2 at the A-site of the ribosome, thereby blocking the interaction sites of the mRNA-tRNA complex, promoting ribosome stabilization and hibernation. Interacts with SPIN1. Interacts with CHD3 and TDRD3. Interacts with ZDHHC17 (via ANK repeats). In terms of processing, phosphorylation by MTOR inhibits SERBP1 and relieves ribosome hibernation.

Ribosome-binding protein that promotes ribosome hibernation, a process during which ribosomes are stabilized in an inactive state and preserved from proteasomal degradation. Acts via its association with EEF2/eEF2 factor, sequestering EEF2/eEF2 at the A-site of the ribosome and promoting ribosome stabilization and storage in an inactive state. May also play a role in the regulation of mRNA stability: binds to the 3'-most 134 nt of the SERPINE1/PAI1 mRNA, a region which confers cyclic nucleotide regulation of message decay. Seems to play a role in PML-nuclear bodies formation. In Oryctolagus cuniculus (Rabbit), this protein is SERPINE1 mRNA-binding protein 1.